Here is a 61-residue protein sequence, read N- to C-terminus: Small venom protein 1 (61 aa).

A signal peptide spans 1–20; sequence MRCVAIFLVVICAFVLQALA.

Expressed by the venom gland.

The protein localises to the secreted. The polypeptide is Small venom protein 1 (Pimpla hypochondriaca (Parasitoid wasp)).